The primary structure comprises 274 residues: Ribosomal RNA small subunit methyltransferase A (274 aa).

6 residues coordinate S-adenosyl-L-methionine: His-15, Leu-17, Gly-42, Glu-64, Asp-89, and Asn-109.

It belongs to the class I-like SAM-binding methyltransferase superfamily. rRNA adenine N(6)-methyltransferase family. RsmA subfamily.

Its subcellular location is the cytoplasm. The enzyme catalyses adenosine(1518)/adenosine(1519) in 16S rRNA + 4 S-adenosyl-L-methionine = N(6)-dimethyladenosine(1518)/N(6)-dimethyladenosine(1519) in 16S rRNA + 4 S-adenosyl-L-homocysteine + 4 H(+). Specifically dimethylates two adjacent adenosines (A1518 and A1519) in the loop of a conserved hairpin near the 3'-end of 16S rRNA in the 30S particle. May play a critical role in biogenesis of 30S subunits. The protein is Ribosomal RNA small subunit methyltransferase A of Synechococcus sp. (strain RCC307).